Consider the following 111-residue polypeptide: MEVQAKLKFAKISAQKCRLVADQIRGLPVEKAINLLTFSNKKAAVLIKDVLNSAIANAEHNDGMDVDSLFVSTVFVDEGPTMKRFEARAKGRGNRILKRTSHITVKVAEKN.

This sequence belongs to the universal ribosomal protein uL22 family. In terms of assembly, part of the 50S ribosomal subunit.

This protein binds specifically to 23S rRNA; its binding is stimulated by other ribosomal proteins, e.g. L4, L17, and L20. It is important during the early stages of 50S assembly. It makes multiple contacts with different domains of the 23S rRNA in the assembled 50S subunit and ribosome. Functionally, the globular domain of the protein is located near the polypeptide exit tunnel on the outside of the subunit, while an extended beta-hairpin is found that lines the wall of the exit tunnel in the center of the 70S ribosome. The sequence is that of Large ribosomal subunit protein uL22 from Francisella philomiragia subsp. philomiragia (strain ATCC 25017 / CCUG 19701 / FSC 153 / O#319-036).